Here is a 436-residue protein sequence, read N- to C-terminus: Mitochondrial substrate carrier family protein Y (436 aa).

Residues 1-102 (MENNNKNINT…NINNNNINKK (102 aa)) form a disordered region. Topologically, residues 1 to 137 (MENNNKNINT…GGFLAGLSRN (137 aa)) are mitochondrial intermembrane. Solcar repeat units lie at residues 135-226 (SRNV…TLKY) and 236-334 (HDTL…LKKQ). Residues 138-158 (VTRIIGSFSSGMAEESAGYPL) form a helical membrane-spanning segment. At 159-194 (DLIKTRIQLSQSGVSGGGGTNTSIIKIFKDVIKTEG) the chain is on the mitochondrial matrix side. A helical transmembrane segment spans residues 195-215 (VIGLFKGLSSPLILSALVTAI). The Mitochondrial intermembrane segment spans residues 216 to 238 (QFGLFEDTLKYFRKHQYFKNHDT). A helical membrane pass occupies residues 239–259 (LSLLFSGSIAGFAQSFITCPV). The Mitochondrial matrix portion of the chain corresponds to 260-313 (DLVKIQMQIQGIPSSQPNSNNNNNNNKAKGNSYFTKLIYREKGLLGFYQGLSPT). Residues 314 to 334 (LFRDVPGLAIFFTTYETLKKQ) traverse the membrane as a helical segment. At 335-347 (FGQPELSTQSPTE) the chain is on the mitochondrial intermembrane side. A helical transmembrane segment spans residues 348–368 (FIKSFIPIVLSGGSAGVFYHG). The stretch at 350 to 436 (KSFIPIVLSG…FLVYEMVINL (87 aa)) is one Solcar 3 repeat. The Mitochondrial matrix portion of the chain corresponds to 369 to 413 (LTHPFDIAKTLIQSDRSATKYKGTFDCLKQVYQNQGPKSLFKGFS). A helical membrane pass occupies residues 414–434 (AVAIKSFQSNAVGFLVYEMVI). At 435-436 (NL) the chain is on the mitochondrial intermembrane side.

It belongs to the mitochondrial carrier (TC 2.A.29) family.

The protein localises to the mitochondrion inner membrane. Its function is as follows. Mitochondrial solute carriers shuttle metabolites, nucleotides, and cofactors through the mitochondrial inner membrane. In Dictyostelium discoideum (Social amoeba), this protein is Mitochondrial substrate carrier family protein Y (mcfY).